The primary structure comprises 51 residues: Large ribosomal subunit protein bL33 (51 aa).

It belongs to the bacterial ribosomal protein bL33 family.

This is Large ribosomal subunit protein bL33 from Colwellia psychrerythraea (strain 34H / ATCC BAA-681) (Vibrio psychroerythus).